We begin with the raw amino-acid sequence, 185 residues long: Ribosome-recycling factor (185 aa).

N6-acetyllysine is present on Lys-162.

Belongs to the RRF family.

The protein resides in the cytoplasm. Responsible for the release of ribosomes from messenger RNA at the termination of protein biosynthesis. May increase the efficiency of translation by recycling ribosomes from one round of translation to another. The sequence is that of Ribosome-recycling factor from Shigella boydii serotype 18 (strain CDC 3083-94 / BS512).